The sequence spans 292 residues: 4-hydroxy-tetrahydrodipicolinate synthase (292 aa).

Thr-45 contributes to the pyruvate binding site. Tyr-133 acts as the Proton donor/acceptor in catalysis. The active-site Schiff-base intermediate with substrate is Lys-162. Ile-204 is a pyruvate binding site.

This sequence belongs to the DapA family. In terms of assembly, homotetramer; dimer of dimers.

It is found in the cytoplasm. It carries out the reaction L-aspartate 4-semialdehyde + pyruvate = (2S,4S)-4-hydroxy-2,3,4,5-tetrahydrodipicolinate + H2O + H(+). It functions in the pathway amino-acid biosynthesis; L-lysine biosynthesis via DAP pathway; (S)-tetrahydrodipicolinate from L-aspartate: step 3/4. Functionally, catalyzes the condensation of (S)-aspartate-beta-semialdehyde [(S)-ASA] and pyruvate to 4-hydroxy-tetrahydrodipicolinate (HTPA). This chain is 4-hydroxy-tetrahydrodipicolinate synthase, found in Maridesulfovibrio salexigens (strain ATCC 14822 / DSM 2638 / NCIMB 8403 / VKM B-1763) (Desulfovibrio salexigens).